We begin with the raw amino-acid sequence, 282 residues long: Malonyl-[acyl-carrier protein] O-methyltransferase 1 (282 aa).

Belongs to the methyltransferase superfamily.

The catalysed reaction is malonyl-[ACP] + S-adenosyl-L-methionine = malonyl-[ACP] methyl ester + S-adenosyl-L-homocysteine. Its pathway is cofactor biosynthesis; biotin biosynthesis. Functionally, converts the free carboxyl group of a malonyl-thioester to its methyl ester by transfer of a methyl group from S-adenosyl-L-methionine (SAM). It allows to synthesize pimeloyl-ACP via the fatty acid synthetic pathway. The sequence is that of Malonyl-[acyl-carrier protein] O-methyltransferase 1 from Coxiella burnetii (strain RSA 493 / Nine Mile phase I).